A 545-amino-acid chain; its full sequence is Glucose-6-phosphate isomerase (545 aa).

Glu351 serves as the catalytic Proton donor. Active-site residues include His382 and Lys510.

It belongs to the GPI family.

Its subcellular location is the cytoplasm. It catalyses the reaction alpha-D-glucose 6-phosphate = beta-D-fructose 6-phosphate. The protein operates within carbohydrate biosynthesis; gluconeogenesis. Its pathway is carbohydrate degradation; glycolysis; D-glyceraldehyde 3-phosphate and glycerone phosphate from D-glucose: step 2/4. Its function is as follows. Catalyzes the reversible isomerization of glucose-6-phosphate to fructose-6-phosphate. The polypeptide is Glucose-6-phosphate isomerase (Helicobacter pylori (strain P12)).